The primary structure comprises 868 residues: Pro-neuregulin-2, membrane-bound isoform (868 aa).

The disordered stretch occupies residues 1 to 114 (MRQVCCSALP…AAGGMRRDPA (114 aa)). The propeptide occupies 1-127 (MRQVCCSALP…SMLLFGVSLA (127 aa)). The segment covering 19–75 (SSYSYSDSSSSSSSNNSSSSTSSRSSSRSSSRSSRGSTTTTSSSENSGSNSGSIFRP) has biased composition (low complexity). N-linked (GlcNAc...) asparagine glycosylation is found at N33 and N34. A compositionally biased stretch (pro residues) spans 76–90 (AAPPEPRPQPQPQPR). Residues 91-108 (SPAARRAAARSRAAAAGG) are compositionally biased toward low complexity. At 128–429 (CYSPSLKSVQ…KEAEELYQKR (302 aa)) the chain is on the extracellular side. Residues N163, N294, and N362 are each glycosylated (N-linked (GlcNAc...) asparagine). Residues 253 to 348 (PKLKKMKSQT…RGRLHVNSVS (96 aa)) enclose the Ig-like C2-type domain. 4 disulfide bridges follow: C273/C327, C361/C375, C369/C386, and C388/C397. The region spanning 357 to 398 (HARKCNETAKSYCVNGGVCYYIEGINQLSCKCPNGFFGQRCL) is the EGF-like domain. A helical transmembrane segment spans residues 430–450 (VLTITGICVALLVVGIVCVVA). Residues 451 to 868 (YCKTKKQRRQ…TRAKQDSGPL (418 aa)) are Cytoplasmic-facing. 5 disordered regions span residues 469–488 (MCPAHQNRSLANGPSHPRLD), 516–553 (TFSGSHSCSPSHHCSTATPTSSHRHESHTWSLERSESL), 671–690 (LLRHPAPPGPGPGPGADMQR), 720–806 (ASPF…DGAL), and 823–868 (LRSD…SGPL). Residues 518 to 530 (SGSHSCSPSHHCS) show a composition bias toward low complexity. Basic and acidic residues predominate over residues 538–551 (HRHESHTWSLERSE). The span at 766–794 (LNGLAAQRARAARDSLSLSSGSGCGSASA) shows a compositional bias: low complexity.

Belongs to the neuregulin family. Interacts with ERBB3 and ERBB4. Post-translationally, proteolytic cleavage close to the plasma membrane on the external face leads to the release of the soluble growth factor form. Extensive glycosylation precedes the proteolytic cleavage. In terms of tissue distribution, expressed in most parts of the brain, especially the olfactory bulb and cerebellum where it localizes in granule and Purkinje cells. In the hippocampus, found in the granule cells of the dentate gyrus. In the basal forebrain, found in the cholinergic cells. In the hindbrain, weakly detectable in the motor trigeminal nucleus. Not detected in the hypothalamus. Also found in the liver and in the thymus. Not detected in heart, adrenal gland, or testis.

It is found in the cell membrane. Its subcellular location is the secreted. Direct ligand for ERBB3 and ERBB4 tyrosine kinase receptors. Concomitantly recruits ERBB1 and ERBB2 coreceptors, resulting in ligand-stimulated tyrosine phosphorylation and activation of the ERBB receptors. May also promote the heterodimerization with the EGF receptor. The polypeptide is Pro-neuregulin-2, membrane-bound isoform (Nrg2) (Rattus norvegicus (Rat)).